Reading from the N-terminus, the 522-residue chain is Protein RCC2 (522 aa).

Residues 1–83 (MPRKKAAAAA…TAGKAGGAAV (83 aa)) form a disordered region. Ser-16 carries the post-translational modification Phosphoserine. Position 20 is a phosphothreonine (Thr-20). Basic residues predominate over residues 24–36 (GPRKRGGPAGRKR). Phosphoserine is present on residues Ser-43, Ser-44, Ser-45, Ser-46, Ser-50, and Ser-51. Positions 71–82 (RPATAGKAGGAA) are enriched in low complexity. N6-acetyllysine occurs at positions 92 and 124. RCC1 repeat units follow at residues 103 to 165 (KGQL…SLLI), 168 to 219 (EGKL…ALTE), 221 to 271 (GSVF…IMDC), 273 to 347 (GNLY…VLDS), 348 to 401 (QKRV…AVSE), 403 to 447 (GGLF…VAAD), and 448 to 501 (ESTI…VIAR). Lys-293 carries the post-translational modification N6-acetyllysine. Residues 318-325 (KTKDGQIL) form a required for interaction with RAC1 region. Thr-342 carries the post-translational modification Phosphothreonine. Lys-377 is subject to N6-acetyllysine. Residues 502-515 (DESETEKEKIKKLP) are compositionally biased toward basic and acidic residues. Positions 502–522 (DESETEKEKIKKLPEYNPRTL) are disordered.

As to quaternary structure, interacts with RAC1. Interacts with nucleotide-free and with GDP and GTP-bound forms of RAC1, with a slight preference for GDP-bound RAC1. Binds preferentially to the nucleotide-free form of RAC1. Interacts with CORO1C. Interacts with microtubules.

It is found in the nucleus. The protein localises to the nucleolus. It localises to the cytoplasm. Its subcellular location is the cytoskeleton. The protein resides in the chromosome. It is found in the centromere. The protein localises to the spindle. It localises to the midbody. Its subcellular location is the cell membrane. Its function is as follows. Multifunctional protein that may affect its functions by regulating the activity of small GTPases, such as RAC1 and RALA. Required for normal progress through the cell cycle, both during interphase and during mitosis. Required for the presence of normal levels of MAD2L1, AURKB and BIRC5 on inner centromeres during mitosis, and for normal attachment of kinetochores to mitotic spindles. Required for normal organization of the microtubule cytoskeleton in interphase cells. Functions as guanine nucleotide exchange factor (GEF) for RALA. Interferes with the activation of RAC1 by guanine nucleotide exchange factors. Prevents accumulation of active, GTP-bound RAC1, and suppresses RAC1-mediated reorganization of the actin cytoskeleton and formation of membrane protrusions. Required for normal cellular responses to contacts with the extracellular matrix of adjacent cells, and for directional cell migration in response to a fibronectin gradient (in vitro). In Homo sapiens (Human), this protein is Protein RCC2 (RCC2).